A 1026-amino-acid polypeptide reads, in one-letter code: DNA polymerase catalytic subunit (1026 aa).

Residues 664–695 adopt a coiled-coil conformation; that stretch reads LKTWLAKRKSIKKELEQCQDAKMKTILDKQQL.

The protein belongs to the DNA polymerase type-B family.

The protein resides in the host nucleus. It catalyses the reaction DNA(n) + a 2'-deoxyribonucleoside 5'-triphosphate = DNA(n+1) + diphosphate. In terms of biological role, replicates viral genomic DNA. The protein is DNA polymerase catalytic subunit (9) of Alcelaphine herpesvirus 1 (strain C500) (AlHV-1).